A 286-amino-acid chain; its full sequence is 2-hydroxy-6-oxo-6-phenylhexa-2,4-dienoate hydrolase (286 aa).

Residues 36–271 (VIMLHGGGPG…RCGHWAQWEH (236 aa)) form the AB hydrolase-1 domain. Substrate contacts are provided by residues 42-43 (GG), N51, N111, S180, and R190. H265 acts as the Proton acceptor in catalysis. W266 provides a ligand contact to substrate.

It belongs to the AB hydrolase superfamily. BphD family. Homodimer.

The enzyme catalyses 2,6-dioxo-6-phenylhexa-3-enoate + H2O = 2-oxopent-4-enoate + benzoate + H(+). It participates in xenobiotic degradation; biphenyl degradation; 2-hydroxy-2,4-pentadienoate and benzoate from biphenyl: step 4/4. In terms of biological role, catalyzes an unusual C-C bond hydrolysis of 2-hydroxy-6-oxo-6-phenylhexa-2,4-dienoic acid (HOPDA) to produce benzoic acid and 2-hydroxy-2,4-pentadienoic acid (HPD). The sequence is that of 2-hydroxy-6-oxo-6-phenylhexa-2,4-dienoate hydrolase from Burkholderia cepacia (Pseudomonas cepacia).